Here is a 1318-residue protein sequence, read N- to C-terminus: Putative tetratricopeptide repeat protein 41 (1318 aa).

TPR repeat units lie at residues 399 to 432, 653 to 684, 817 to 850, 858 to 891, 991 to 1027, and 1045 to 1082; these read TQLE…KPCI, WVQE…TPVE, CRLM…LVQS, LKVQ…MLRL, MEFL…KENA, and SDTL…RVIH.

The protein resides in the cytoplasm. This is Putative tetratricopeptide repeat protein 41 from Homo sapiens (Human).